The chain runs to 404 residues: Multidrug resistance protein MdtG (404 aa).

11 consecutive transmembrane segments (helical) span residues 19 to 39 (LGCF…PLYV), 56 to 76 (LVFS…GGLA), 90 to 110 (LGMA…QFLI), 113 to 133 (ALLG…ATQV), 144 to 164 (TLST…GLLA), 171 to 191 (PVFF…FFFI), 222 to 242 (LFVT…ILTL), 254 to 274 (IAFI…LSAP), 288 to 308 (ILIV…FVQT), 317 to 337 (FLLG…LVYN), and 376 to 396 (AVFC…WNSL).

It belongs to the major facilitator superfamily. DHA1 family. MdtG (TC 2.A.1.2.20) subfamily.

Its subcellular location is the cell inner membrane. The chain is Multidrug resistance protein MdtG from Salmonella typhimurium (strain LT2 / SGSC1412 / ATCC 700720).